The sequence spans 83 residues: MAVCIRLARGGKKKKPVYSVVVADKRMARDGRFLEKLGQYIPMKEGGTFAINQERYAHWISQGAKPSETVGKLVAKQQNAAEA.

Belongs to the bacterial ribosomal protein bS16 family.

The chain is Small ribosomal subunit protein bS16 from Magnetococcus marinus (strain ATCC BAA-1437 / JCM 17883 / MC-1).